A 529-amino-acid chain; its full sequence is Beta-glucosidase 11 (529 aa).

Residues 1 to 25 (MAVAGAMVMSGALLLLHLLAFTCVA) form the signal peptide. Residues Gln-54, His-157, and 202–203 (NE) contribute to the a beta-D-glucoside site. Glu-203 acts as the Proton donor in catalysis. A disulfide bridge links Cys-222 with Cys-230. Tyr-346 is an a beta-D-glucoside binding site. The N-linked (GlcNAc...) asparagine glycan is linked to Asn-361. Residue Glu-417 participates in a beta-D-glucoside binding. Residue Glu-417 is the Nucleophile of the active site. Asn-425 carries an N-linked (GlcNAc...) asparagine glycan. A beta-D-glucoside contacts are provided by residues Trp-466, 473-474 (EW), and Phe-482.

This sequence belongs to the glycosyl hydrolase 1 family.

The catalysed reaction is Hydrolysis of terminal, non-reducing beta-D-glucosyl residues with release of beta-D-glucose.. This chain is Beta-glucosidase 11 (BGLU11), found in Oryza sativa subsp. japonica (Rice).